We begin with the raw amino-acid sequence, 165 residues long: Transcriptional regulator MraZ (165 aa).

SpoVT-AbrB domains are found at residues 5–51 and 80–123; these read TYEG…GEEL and SAEL…NPER.

This sequence belongs to the MraZ family. Forms oligomers.

The protein localises to the cytoplasm. It localises to the nucleoid. The chain is Transcriptional regulator MraZ from Hyphomonas neptunium (strain ATCC 15444).